The chain runs to 407 residues: uncharacterized protein (407 aa).

Disordered regions lie at residues 1-62 and 350-379; these read MTGR…NGDP and SVTP…KPSS. Residues 17–30 show a composition bias toward basic and acidic residues; it reads PVEKMPRFQREHGA.

This is an uncharacterized protein from Ictaluridae (bullhead catfishes).